Reading from the N-terminus, the 175-residue chain is Alpha-crystallin B chain (175 aa).

At methionine 1 the chain carries N-acetylmethionine. Phosphoserine occurs at positions 19, 45, and 59. The sHSP domain occupies 56 to 164; it reads RAPSWIDTGL…PERTIPITRE (109 aa). Histidine 83 lines the Zn(2+) pocket. An N6-acetyllysine modification is found at lysine 92. Residues histidine 104, glutamate 106, histidine 111, and histidine 119 each coordinate Zn(2+). Residues 145 to 175 form a disordered region; it reads VNGPRKQVSGPERTIPITREEKPAVAAAPKK. Position 166 is an N6-acetyllysine (lysine 166).

This sequence belongs to the small heat shock protein (HSP20) family. In terms of assembly, heteromer composed of three CRYAA and one CRYAB subunits. Aggregates with homologous proteins, including the small heat shock protein HSPB1, to form large heteromeric complexes. Inter-subunit bridging via zinc ions enhances stability, which is crucial as there is no protein turn over in the lens. Interacts with HSPBAP1. Interacts with TTN/titin. Interacts with TMEM109; in the cellular response to DNA damage. Interacts with DES; binds rapidly during early stages of DES filament assembly and a reduced binding seen in the later stages. Interacts with TMED10; the interaction mediates the translocation from the cytoplasm into the ERGIC (endoplasmic reticulum-Golgi intermediate compartment) and thereby secretion. Interacts with ATP6V1A and with MTOR, forming a ternary complex. In terms of tissue distribution, abundantly expressed in the lens of the eye. Expressed in ventricular cardiomyocytes of the heart. Also expressed in skeletal muscle and the kidney.

It localises to the cytoplasm. It is found in the cytosol. Its subcellular location is the nucleus. The protein localises to the secreted. The protein resides in the lysosome. May contribute to the transparency and refractive index of the lens. Has chaperone-like activity, preventing aggregation of various proteins under a wide range of stress conditions. In lens epithelial cells, stabilizes the ATP6V1A protein, preventing its degradation by the proteasome. The chain is Alpha-crystallin B chain from Mus musculus (Mouse).